Here is a 168-residue protein sequence, read N- to C-terminus: Protein C2-DOMAIN ABA-RELATED 1 (168 aa).

Residue M1 is modified to N-acetylmethionine. Positions 1-104 (MENLVGLLRI…EAIKFAHQLG (104 aa)) constitute a C2 domain. Residues R21, D22, D27, D73, Y74, D75, and D81 each coordinate Ca(2+).

The protein belongs to the plant CAR protein family. In terms of assembly, dimers and oligomers. Binds to PYR/PYL/RCAR abscisic acid intracellular receptors in an ABA-independent manner, both at the plasma membrane and in the nucleus. Interacts directly with PYR1, PYL1, PYL4, PYL6 and PYL8. Binds phospholipids in a Ca(2+)-dependent manner. Ca(2+) serves as cofactor. In terms of tissue distribution, expressed in roots.

Its subcellular location is the cell membrane. The protein localises to the nucleus. Functionally, stimulates the GTPase/ATPase activities of Obg-like ATPases. Mediates the transient calcium-dependent interaction of PYR/PYL/RCAR abscisic acid (ABA) receptors with the plasma membrane and thus regulates ABA sensitivity. Binds liposomes in the absence of exogenous Ca(2+), but this activity is enhanced in the presence of Ca(2+) and generates membrane curvature. The polypeptide is Protein C2-DOMAIN ABA-RELATED 1 (Arabidopsis thaliana (Mouse-ear cress)).